The primary structure comprises 465 residues: A-type ATP synthase subunit B (465 aa).

Belongs to the ATPase alpha/beta chains family. As to quaternary structure, has multiple subunits with at least A(3), B(3), C, D, E, F, H, I and proteolipid K(x).

The protein resides in the cell membrane. Component of the A-type ATP synthase that produces ATP from ADP in the presence of a proton gradient across the membrane. The B chain is a regulatory subunit. The sequence is that of A-type ATP synthase subunit B from Sulfurisphaera tokodaii (strain DSM 16993 / JCM 10545 / NBRC 100140 / 7) (Sulfolobus tokodaii).